Reading from the N-terminus, the 257-residue chain is Ribonuclease HII (257 aa).

The RNase H type-2 domain maps to 70–257; the sequence is EFIAGIDEVG…PIKSMVAGGN (188 aa). Residues aspartate 76, glutamate 77, and aspartate 168 each coordinate a divalent metal cation.

Belongs to the RNase HII family. Requires Mn(2+) as cofactor. It depends on Mg(2+) as a cofactor.

The protein localises to the cytoplasm. The catalysed reaction is Endonucleolytic cleavage to 5'-phosphomonoester.. In terms of biological role, endonuclease that specifically degrades the RNA of RNA-DNA hybrids. The protein is Ribonuclease HII of Streptococcus suis (strain 98HAH33).